A 1423-amino-acid chain; its full sequence is Fructan beta-fructosidase (1423 aa).

Positions 1–39 (MEEETVCKNWFMRKSGKSWIFGCAVFFVLGLATALPVAA) are cleaved as a signal peptide. The segment at 44 to 161 (QTTAADTAVT…TNLEDMSHDT (118 aa)) is disordered. Residues 69-126 (AVTETTQSEGTASKQLTTPAVADQTTEPTDNEPISSSDGASSPYQVTDTTEPQQTLTP) are compositionally biased toward polar residues. Residues 455-458 (WAND), glutamine 474, 513-514 (FS), 581-582 (RD), and aspartate 783 contribute to the substrate site. Aspartate 458 is a catalytic residue. The tract at residues 867–871 (ASVEV) is involved in binding of sugars with beta-(2,6) linkages or binding of molecular weight fructans. The BIG2 domain occupies 924-1002 (PVAMNTTTAK…SKENPSLSKT (79 aa)). A compositionally biased stretch (polar residues) spans 1368–1385 (DVNSVQQTEPSVMSSSPK). Residues 1368 to 1394 (DVNSVQQTEPSVMSSSPKATLPDTGDH) form a disordered region. The LPXTG sorting signal motif lies at 1388–1392 (LPDTG). Threonine 1391 carries the post-translational modification Pentaglycyl murein peptidoglycan amidated threonine. Positions 1392–1423 (GDHKTDLSQLGVLAMIGSFLVEIAGYFKKRKD) are cleaved as a propeptide — removed by sortase.

It belongs to the glycosyl hydrolase 32 family.

It localises to the secreted. The protein localises to the cell wall. It carries out the reaction Hydrolysis of terminal, non-reducing (2-&gt;1)- and (2-&gt;6)-linked beta-D-fructofuranose residues in fructans.. Functionally, this protein is a fructanase enzyme which degrades levans and inulins to fructose and also cleaves sucrose into glucose and fructose and can therefore function as an extracellular invertase. The sequence is that of Fructan beta-fructosidase (fruA) from Streptococcus mutans serotype c (strain ATCC 700610 / UA159).